Here is a 309-residue protein sequence, read N- to C-terminus: Elongation factor Ts (309 aa).

Positions 82-85 are involved in Mg(2+) ion dislocation from EF-Tu; the sequence is TDFV.

It belongs to the EF-Ts family.

Its subcellular location is the cytoplasm. Its function is as follows. Associates with the EF-Tu.GDP complex and induces the exchange of GDP to GTP. It remains bound to the aminoacyl-tRNA.EF-Tu.GTP complex up to the GTP hydrolysis stage on the ribosome. This chain is Elongation factor Ts, found in Rickettsia peacockii (strain Rustic).